Here is a 168-residue protein sequence, read N- to C-terminus: Photosystem I assembly protein Ycf3 (168 aa).

3 TPR repeats span residues Ala-35–Pro-68, Ser-72–Leu-105, and Gly-120–Asn-153.

Belongs to the Ycf3 family.

It is found in the plastid. It localises to the chloroplast thylakoid membrane. In terms of biological role, essential for the assembly of the photosystem I (PSI) complex. May act as a chaperone-like factor to guide the assembly of the PSI subunits. The sequence is that of Photosystem I assembly protein Ycf3 from Jasminum nudiflorum (Winter jasmine).